The chain runs to 567 residues: Zinc finger protein 512 (567 aa).

The disordered stretch occupies residues 1–32 (MSSRLGAVPATSGPTTFKQQRSTRIVGAKNSR). Residues 12–23 (SGPTTFKQQRST) are compositionally biased toward polar residues. Glycyl lysine isopeptide (Lys-Gly) (interchain with G-Cter in SUMO2) cross-links involve residues lysine 18 and lysine 84. The disordered stretch occupies residues 86–148 (AATSHVEGSG…QARRIRKEPP (63 aa)). The span at 119–130 (KKHKLYGRKQRP) shows a compositional bias: basic residues. The C2H2-type 1 zinc-finger motif lies at 197–220 (FTCHHCGKQLRSLAGMKYHVMANH). Residue lysine 227 forms a Glycyl lysine isopeptide (Lys-Gly) (interchain with G-Cter in SUMO2) linkage. A C2H2-type 2 zinc finger spans residues 287–310 (LKCHHCGKPYRSKAGLAYHLRSEH). Lysine 333 participates in a covalent cross-link: Glycyl lysine isopeptide (Lys-Gly) (interchain with G-Cter in SUMO2). The C2H2-type 3; atypical zinc-finger motif lies at 406-430 (IQCPNQGCEAVYSSVSGLKAHLGSC). The C2H2-type 4 zinc finger occupies 440 to 463 (YKCLLCQKEFVSESGVKYHINSVH). A disordered region spans residues 486-567 (QRQQEEEKRR…PKTNHKRGRK (82 aa)). Basic residues predominate over residues 495 to 508 (RQQHRSRRSLRRRQ). The span at 523–532 (VGKDQRRNNE) shows a compositional bias: basic and acidic residues. The span at 556 to 567 (KPPKTNHKRGRK) shows a compositional bias: basic residues.

It belongs to the krueppel C2H2-type zinc-finger protein family.

It is found in the nucleus. Its function is as follows. May be involved in transcriptional regulation. The chain is Zinc finger protein 512 (ZNF512) from Pongo abelii (Sumatran orangutan).